Here is a 254-residue protein sequence, read N- to C-terminus: Small ribosomal subunit protein uS2 (254 aa).

It belongs to the universal ribosomal protein uS2 family.

The protein is Small ribosomal subunit protein uS2 of Legionella pneumophila subsp. pneumophila (strain Philadelphia 1 / ATCC 33152 / DSM 7513).